Here is a 246-residue protein sequence, read N- to C-terminus: Uridylate kinase (246 aa).

18 to 21 (KVSG) provides a ligand contact to ATP. Residue G60 participates in UMP binding. G61 and R65 together coordinate ATP. UMP is bound by residues D80 and 141–148 (TGNPFFTT). Residues T168, Q169, Y174, and D177 each coordinate ATP.

It belongs to the UMP kinase family. As to quaternary structure, homohexamer.

It is found in the cytoplasm. It carries out the reaction UMP + ATP = UDP + ADP. Its pathway is pyrimidine metabolism; CTP biosynthesis via de novo pathway; UDP from UMP (UMPK route): step 1/1. Its activity is regulated as follows. Inhibited by UTP. Catalyzes the reversible phosphorylation of UMP to UDP. The polypeptide is Uridylate kinase (Granulibacter bethesdensis (strain ATCC BAA-1260 / CGDNIH1)).